A 215-amino-acid polypeptide reads, in one-letter code: MTKSISIEHLQFDEKGLIPAIVQDHQSGQVLTLAYMNSDSITKTIETNETWFYSRKRQELWNKGATSGNKQTVKQISFDCDADAVLVLVDAQGPACHTGEESCFYEDLYKNDVALLQIIPQVSAKIKERHEHPVEGAYTSYLFEKGVDKILKKIGEEATEVVIAAKNEDKQELTSELSDLLYHSLVLMEQQGVTLEDIKKELYKRHVEKEGQQRE.

The tract at residues Met-1–Ile-118 is phosphoribosyl-AMP cyclohydrolase. Residues Ile-119–Glu-215 form a phosphoribosyl-ATP pyrophosphohydrolase region.

In the N-terminal section; belongs to the PRA-CH family. The protein in the C-terminal section; belongs to the PRA-PH family.

It is found in the cytoplasm. The catalysed reaction is 1-(5-phospho-beta-D-ribosyl)-ATP + H2O = 1-(5-phospho-beta-D-ribosyl)-5'-AMP + diphosphate + H(+). It carries out the reaction 1-(5-phospho-beta-D-ribosyl)-5'-AMP + H2O = 1-(5-phospho-beta-D-ribosyl)-5-[(5-phospho-beta-D-ribosylamino)methylideneamino]imidazole-4-carboxamide. It participates in amino-acid biosynthesis; L-histidine biosynthesis; L-histidine from 5-phospho-alpha-D-ribose 1-diphosphate: step 2/9. It functions in the pathway amino-acid biosynthesis; L-histidine biosynthesis; L-histidine from 5-phospho-alpha-D-ribose 1-diphosphate: step 3/9. The chain is Histidine biosynthesis bifunctional protein HisIE from Oceanobacillus iheyensis (strain DSM 14371 / CIP 107618 / JCM 11309 / KCTC 3954 / HTE831).